The sequence spans 290 residues: 38 kDa phosphoprotein (290 aa).

Disordered stretches follow at residues Met-1–Glu-49, Trp-67–Lys-87, and Leu-111–Met-146. Residues Glu-34–Glu-49 are compositionally biased toward basic and acidic residues. Residues Pro-113 to Gly-145 are compositionally biased toward basic and acidic residues. The next 2 helical transmembrane spans lie at Ile-226 to Val-246 and Pro-255 to Val-275.

In terms of processing, phosphorylated.

It localises to the membrane. This Gallus gallus (Chicken) protein is 38 kDa phosphoprotein (PP38).